The chain runs to 205 residues: Nitrophorin-7 (205 aa).

Residues 1–20 form the signal peptide; the sequence is MELYTALLAVTILSPSSIVG. Cystine bridges form between cysteine 25–cysteine 144 and cysteine 62–cysteine 193. Aspartate 52 provides a ligand contact to histamine. Positions 80 and 91 each coordinate heme. Aspartate 154 is a binding site for histamine.

The protein belongs to the calycin superfamily. Nitrophorin family. Forms oligomers (at pH 5.5). Heme b serves as cofactor. Expressed in the endothelial cells of the salivary glands.

Its subcellular location is the secreted. The catalysed reaction is 3 nitrite + 2 H(+) = 2 nitric oxide + nitrate + H2O. In terms of biological role, converts nitrite as the sole substrate to form nitric oxide gas (NO). NO(2-) serves both as an electron donor and as an electron acceptor. Binds to negatively charged cell surfaces of activated platelets; binds to L-a-phosphatidyl-L-serine (PS)-bearing phospholipid membranes. Once bound on an activated platelet, NP7 releases its stored nitric oxide gas (NO) into the victim's tissues while feeding, resulting in vasodilation and inhibition of platelet aggregation. Also acts as an anticoagulant by blocking coagulation-factor binding sites. Has antihistamine activity; binds histamine with high affinity. This Rhodnius prolixus (Triatomid bug) protein is Nitrophorin-7.